Here is a 64-residue protein sequence, read N- to C-terminus: Large ribosomal subunit protein bL35 (64 aa).

A compositionally biased stretch (basic residues) spans 1–44; the sequence is MSKIKSHSGAAKRFKRTANGFKHKQSHTSHILTKKSTKRKRHLR. The disordered stretch occupies residues 1 to 48; the sequence is MSKIKSHSGAAKRFKRTANGFKHKQSHTSHILTKKSTKRKRHLRSMNQ.

This sequence belongs to the bacterial ribosomal protein bL35 family.

This is Large ribosomal subunit protein bL35 from Marinomonas sp. (strain MWYL1).